A 201-amino-acid polypeptide reads, in one-letter code: Peptide deformylase (201 aa).

2 residues coordinate Fe cation: Cys92 and His134. Residue Glu135 is part of the active site. His138 contacts Fe cation.

The protein belongs to the polypeptide deformylase family. It depends on Fe(2+) as a cofactor.

It catalyses the reaction N-terminal N-formyl-L-methionyl-[peptide] + H2O = N-terminal L-methionyl-[peptide] + formate. Functionally, removes the formyl group from the N-terminal Met of newly synthesized proteins. Requires at least a dipeptide for an efficient rate of reaction. N-terminal L-methionine is a prerequisite for activity but the enzyme has broad specificity at other positions. The polypeptide is Peptide deformylase (Rhodopirellula baltica (strain DSM 10527 / NCIMB 13988 / SH1)).